The primary structure comprises 366 residues: Galactoside alpha-(1,2)-fucosyltransferase 1 (366 aa).

Over 1–8 (MWPRSHRH) the chain is Cytoplasmic. Residues 9 to 25 (LCLAFLLVCVLSAISFL) form a helical; Signal-anchor for type II membrane protein membrane-spanning segment. Over 26-366 (IHFHQDSIRH…LSPLWPLAEP (341 aa)) the chain is Lumenal. N-linked (GlcNAc...) asparagine glycosylation is found at N66, N302, and N328.

This sequence belongs to the glycosyltransferase 11 family.

It localises to the golgi apparatus. The protein localises to the golgi stack membrane. It catalyses the reaction a beta-D-galactosyl-(1-&gt;4)-N-acetyl-beta-D-glucosaminyl derivative + GDP-beta-L-fucose = an alpha-L-Fuc-(1-&gt;2)-beta-D-Gal-(1-&gt;4)-beta-D-GlcNAc derivative + GDP + H(+). The enzyme catalyses a ganglioside GA1 + GDP-beta-L-fucose = a ganglioside Fuc-GA1 + GDP + H(+). The catalysed reaction is a beta-D-Gal-(1-&gt;3)-beta-D-GlcNAc-(1-&gt;3)-beta-D-Gal-(1-&gt;4)-beta-D-Glc-(1&lt;-&gt;1')-Cer(d18:1(4E)) + GDP-beta-L-fucose = alpha-L-fucosyl-(1-&gt;2)- beta-D-galactosyl-(1-&gt;3)-N-acetyl-beta-D-glucosaminyl-(1-&gt;3)-beta-D-galactosyl-(1-&gt;4)-beta-D-glucosyl-(1&lt;-&gt;1')-N-acylsphing-4-enine + GDP + H(+). It carries out the reaction a neolactoside nLc4Cer(d18:1(4E)) + GDP-beta-L-fucose = a neolactoside IV(2)-alpha-Fuc-nLc4Cer(d18:1(4E)) + GDP + H(+). It catalyses the reaction a ganglioside GM1 + GDP-beta-L-fucose = a ganglioside Fuc-GM1 + GDP + H(+). The enzyme catalyses beta-D-galactosyl-(1-&gt;3)-N-acetyl-D-galactosamine + GDP-beta-L-fucose = alpha-L-fucosyl-(1-&gt;2)-beta-D-galactosyl-(1-&gt;3)-N-acetyl-D-galactosamine + GDP + H(+). It functions in the pathway protein modification; protein glycosylation. In terms of biological role, catalyzes the transfer of L-fucose, from a guanosine diphosphate-beta-L-fucose, to the terminal galactose residue of glycoconjugates through an alpha(1,2) linkage leading to H antigen synthesis that is an intermediate substrate in the synthesis of ABO blood group antigens. H antigen is essential for maturation of the glomerular layer of the main olfactory bulb, in cell migration and early cell-cell contacts during tumor associated angiogenesis. Preferentially fucosylates soluble lactose and to a lesser extent fucosylates glycolipids gangliosides GA1 and GM1a. This chain is Galactoside alpha-(1,2)-fucosyltransferase 1, found in Saimiri boliviensis boliviensis (Bolivian squirrel monkey).